Consider the following 364-residue polypeptide: Leucine-rich repeat-containing protein 19 (364 aa).

An N-terminal signal peptide occupies residues 1–20 (MKVTRFMFWLFSMLLPSVKS). Over 21–264 (QASETEVPCN…SEHEPLGKSW (244 aa)) the chain is Extracellular. N-linked (GlcNAc...) asparagine glycans are attached at residues Asn30, Asn35, Asn46, and Asn88. 6 LRR repeats span residues 44–69 (STNVTILDLSYNRITLNAADSRVLQM), 70–93 (YSLLTELYLMENNIIALYNSSFRN), 94–117 (LLNLEILNICGNSISVIQQGSFVG), 118–141 (LNELKQLFLCQNKILQLNPDTFVP), 143–163 (NNLKVLNLQGNLIRLFDAPQL), and 164–190 (PHLEILTLDGNPWNCTCGLLELHNWLN). Residues 174–225 (NPWNCTCGLLELHNWLNTSNVTLENENMTMCSYPDELKHDSIKSAPFTTECH) form the LRRCT domain. 7 N-linked (GlcNAc...) asparagine glycosylation sites follow: Asn177, Asn190, Asn193, Asn200, Asn241, Asn245, and Asn250. A helical transmembrane segment spans residues 265-285 (AFLVGVVATVLLTSLLIFIAI). Over 286-364 (KCPVWYNILL…IDINEVHEEK (79 aa)) the chain is Cytoplasmic.

Interacts with TRAF2 and TRAF6. In terms of tissue distribution, strongly expressed in kidney, also expressed in spleen, intestine and colon. Highly expressed in epithelial cells. In kidney, mainly expressed in renal collecting duct epithelial cells.

The protein resides in the membrane. With respect to regulation, activated by TLR ligands such as LPS, bacterial DNA and peptidoglycan. Its function is as follows. Pathogen-recognition receptor which mediates the activation of TRAF2- and TRAF6 NF-kappa-B signaling pathways and induces the expression of pro-inflammatory cytokines. In kidney, prevents infection by uropathogenic bacteria by inducing the production of cytokines, chemokines and antimicrobial substances. In gut, involved in host-microbiota interactions, plays a critical role in promoting the recruitment of immune cells and intestinal inflammation. In Mus musculus (Mouse), this protein is Leucine-rich repeat-containing protein 19.